Reading from the N-terminus, the 253-residue chain is Probable transcriptional regulatory protein KRH_13670 (253 aa).

This sequence belongs to the TACO1 family.

The protein localises to the cytoplasm. In Kocuria rhizophila (strain ATCC 9341 / DSM 348 / NBRC 103217 / DC2201), this protein is Probable transcriptional regulatory protein KRH_13670.